We begin with the raw amino-acid sequence, 81 residues long: ATP synthase subunit c (81 aa).

A run of 2 helical transmembrane segments spans residues 7 to 27 (FVAL…CIGI) and 53 to 73 (FLLA…AMMF).

It belongs to the ATPase C chain family. In terms of assembly, F-type ATPases have 2 components, F(1) - the catalytic core - and F(0) - the membrane proton channel. F(1) has five subunits: alpha(3), beta(3), gamma(1), delta(1), epsilon(1). F(0) has three main subunits: a(1), b(2) and c(10-14). The alpha and beta chains form an alternating ring which encloses part of the gamma chain. F(1) is attached to F(0) by a central stalk formed by the gamma and epsilon chains, while a peripheral stalk is formed by the delta and b chains.

It localises to the cell inner membrane. In terms of biological role, f(1)F(0) ATP synthase produces ATP from ADP in the presence of a proton or sodium gradient. F-type ATPases consist of two structural domains, F(1) containing the extramembraneous catalytic core and F(0) containing the membrane proton channel, linked together by a central stalk and a peripheral stalk. During catalysis, ATP synthesis in the catalytic domain of F(1) is coupled via a rotary mechanism of the central stalk subunits to proton translocation. Key component of the F(0) channel; it plays a direct role in translocation across the membrane. A homomeric c-ring of between 10-14 subunits forms the central stalk rotor element with the F(1) delta and epsilon subunits. This is ATP synthase subunit c from Azoarcus sp. (strain BH72).